Consider the following 453-residue polypeptide: ACT domain-containing protein ACR3 (453 aa).

4 ACT domains span residues 37–112 (LVKV…SASQ), 130–212 (SIEI…KFAR), 266–341 (VINV…RVSE), and 344–423 (SLEL…VPSR).

In terms of tissue distribution, expressed in roots, cotyledons, rosette and cauline leaves, sepals, style, and pedicels and tips of young developing siliques.

May bind amino acids. In Arabidopsis thaliana (Mouse-ear cress), this protein is ACT domain-containing protein ACR3.